Consider the following 343-residue polypeptide: Aspartate carbamoyltransferase catalytic subunit (343 aa).

The carbamoyl phosphate site is built by Arg-91 and Thr-92. Lys-119 is a binding site for L-aspartate. The carbamoyl phosphate site is built by Arg-141, His-171, and Gln-174. L-aspartate is bound by residues Arg-204 and Arg-259. Residues Gly-300 and Pro-301 each contribute to the carbamoyl phosphate site.

Belongs to the aspartate/ornithine carbamoyltransferase superfamily. ATCase family. Heterododecamer (2C3:3R2) of six catalytic PyrB chains organized as two trimers (C3), and six regulatory PyrI chains organized as three dimers (R2).

The catalysed reaction is carbamoyl phosphate + L-aspartate = N-carbamoyl-L-aspartate + phosphate + H(+). The protein operates within pyrimidine metabolism; UMP biosynthesis via de novo pathway; (S)-dihydroorotate from bicarbonate: step 2/3. Its function is as follows. Catalyzes the condensation of carbamoyl phosphate and aspartate to form carbamoyl aspartate and inorganic phosphate, the committed step in the de novo pyrimidine nucleotide biosynthesis pathway. This Burkholderia cenocepacia (strain HI2424) protein is Aspartate carbamoyltransferase catalytic subunit.